A 634-amino-acid chain; its full sequence is Dynein axonemal assembly factor 1 (634 aa).

Residues 1–80 (MHPEVSEPPV…SRDDREDRGP (80 aa)) are disordered. Over residues 22-42 (AGDHGDAGPGIRKEEISETKE) the composition is skewed to basic and acidic residues. Residues 48 to 62 (CTTSCPSQQQPSGDN) are compositionally biased toward polar residues. Residues 70–80 (HSRDDREDRGP) show a composition bias toward basic and acidic residues. 6 LRR repeats span residues 101–123 (ALND…EEYT), 124–145 (GLRC…QAQS), 146–167 (ELRC…EPLQ), 168–189 (KLDA…SCLP), 190–211 (VLNT…EHLR), and 215–236 (RLCV…SVLE). In terms of domain architecture, LRRCT spans 249-288 (NPVTKHIPNYRRTVTVRLKHLTYLDDRPVFPKDRACAEAW). Residues 326 to 336 (EERKKARDRGE) are compositionally biased toward basic and acidic residues. A disordered region spans residues 326–358 (EERKKARDRGETPLPDSEGSIPTSPEAEEKQPM). S349 carries the phosphoserine modification. Residue T462 is modified to Phosphothreonine. Residues S465 and S488 each carry the phosphoserine modification. Disordered stretches follow at residues 481-505 (ISSL…ATPT) and 559-634 (ELND…FGLD).

The protein belongs to the DNAAF1 family.

The protein localises to the cell projection. Its subcellular location is the cilium. Functionally, cilium-specific protein required for the stability of the ciliary architecture. Plays a role in cytoplasmic preassembly of dynein arms. Involved in regulation of microtubule-based cilia and actin-based brush border microvilli. This Mus musculus (Mouse) protein is Dynein axonemal assembly factor 1 (Dnaaf1).